Consider the following 99-residue polypeptide: Large ribosomal subunit protein uL23 (99 aa).

It belongs to the universal ribosomal protein uL23 family. As to quaternary structure, part of the 50S ribosomal subunit. Contacts protein L29, and trigger factor when it is bound to the ribosome.

In terms of biological role, one of the early assembly proteins it binds 23S rRNA. One of the proteins that surrounds the polypeptide exit tunnel on the outside of the ribosome. Forms the main docking site for trigger factor binding to the ribosome. In Hyphomonas neptunium (strain ATCC 15444), this protein is Large ribosomal subunit protein uL23.